The primary structure comprises 864 residues: Structure-specific endonuclease subunit SLX4 (864 aa).

8 disordered regions span residues 1-21 (MTTQ…PVIP), 49-69 (LSTS…KTQG), 91-113 (TGTG…PGNA), 161-190 (ANQT…GNDH), 289-318 (LSDD…NRPK), 346-385 (TLLS…NEPP), 413-433 (ANGH…ISNS), and 625-767 (KAPN…VTSS). The span at 295–306 (SSITEDSESATS) shows a compositional bias: polar residues. Positions 307–318 (KPRRVKAKNRPK) are enriched in basic residues. Over residues 656–668 (QPNSISQKATTQV) the composition is skewed to polar residues. A compositionally biased stretch (low complexity) spans 685 to 695 (VSSRRSTSTSK). Over residues 743–767 (PESFNLPTTPLTIRSGKVPSTVTSS) the composition is skewed to polar residues.

Belongs to the SLX4 family. As to quaternary structure, forms a heterodimer with SLX1. Phosphorylated in response to DNA damage.

It localises to the nucleus. Regulatory subunit of the SLX1-SLX4 structure-specific endonuclease that resolves DNA secondary structures generated during DNA repair and recombination. Has endonuclease activity towards branched DNA substrates, introducing single-strand cuts in duplex DNA close to junctions with ss-DNA. This Paracoccidioides lutzii (strain ATCC MYA-826 / Pb01) (Paracoccidioides brasiliensis) protein is Structure-specific endonuclease subunit SLX4.